A 1036-amino-acid polypeptide reads, in one-letter code: Histidine kinase 3 (1036 aa).

The Extracellular portion of the chain corresponds to 1-8; that stretch reads MSLFHVLG. A helical transmembrane segment spans residues 9–29; the sequence is FGVKIGHLFWMLCCWFVSWFV. Over 30–94 the chain is Cytoplasmic; the sequence is DNGIEDKSGL…VKFNKAWWRK (65 aa). A helical transmembrane segment spans residues 95 to 115; sequence LVVVWVVFWVLVSIWTFWYFS. Over 116-399 the chain is Extracellular; sequence SQAMEKRKET…CRFKQKPPWP (284 aa). Residues 163–389 enclose the CHASE domain; sequence IPSAIDQRTF…GDPLRKHEMR (227 aa). A helical transmembrane segment spans residues 400–420; sequence VLSMVTSFGILVIALLVAHII. Over 421–1036 the chain is Cytoplasmic; sequence HATVSRIHKV…FFNSPSDTES (616 aa). Residues 457–723 enclose the Histidine kinase domain; the sequence is TVSHEIRTPM…TFTFTAVFSN (267 aa). Position 460 is a phosphohistidine; by autocatalysis (His460). 2 consecutive Response regulatory domains span residues 746–865 and 891–1028; these read KAVV…QRGL and KILI…SRFF. A 4-aspartylphosphate modification is found at Asp941.

In terms of assembly, interacts with AHK2, AHK4, AHP1, AHP2, AHP3, AHP5 and At5g43560. Autophosphorylated predominantly on His residues. Activation probably requires a transfer of a phosphate group between a His in the transmitter domain and an Asp of the receiver domain. Mostly expressed in leaves and flowers, and, to a lower extent, in roots, stems, and siliques, especially in the vascular tissues. Present in seedlings.

It is found in the cell membrane. Its subcellular location is the endoplasmic reticulum membrane. It catalyses the reaction ATP + protein L-histidine = ADP + protein N-phospho-L-histidine.. With respect to regulation, activated by cytokinins to initiate phosphorelay signaling. This cytokinin-mediated activation is repressed by the trans-zeatin antagonists 6-(2-hydroxy-3-methylbenzylamino)purine (PI-55) and 6-(2,5-Dihydroxybenzylamino)purine (LGR-991). In terms of biological role, cytokinins (CK) receptor related to bacterial two-component regulators. Functions as a histidine kinase and transmits the stress signal to a downstream MAPK cascade. This protein undergoes an ATP-dependent autophosphorylation at a conserved histidine residue in the kinase core, and a phosphoryl group is then transferred to a conserved aspartate residue in the receiver domain. In the presence of cytokinin, feeds phosphate to phosphorelay-integrating histidine phosphotransfer protein (HPt) and activates subsequent cascade. Involved in meristems establishment in seedlings. Redundant negative regulator of drought and salt stress responses and abscisic acid (ABA) signaling. Together with AHK2, plays a negative regulatory role in cold stress signaling via inhibition of ABA response, occurring independently of the cold acclimation pathway. Redundant positive regulator of cytokinin signaling that regulates many developmental processes including seed germination, cell division, seed size, chlorophyll retention during leaf senescence, root repression and shoot promotion. Can interact with isoprenoid-type cytokinins trans-zeatin (tZ and tZR), cis-zeatin (cZ), dihydrozeatin (DZ), buta-2,3-dienyladenine (HA-8), penta-2,3-dienyladenine (HA-1), 4-methyl-penta-2,3-dienyladenine (HA-10), 4-hydroxy-2-butynyladenine (RM1), 2-propynyladenine (RM3), 2-butynyladenine (RM6), and cytokinin ribosides and ribotides. Together with AHK4, involved in the cytokinin-dependent responses to Pi starvation and sucrose stresses. Promotes cytokinin-mediated leaf longevity through a specific phosphorylation of the response regulator ARR2. Involved in alkamides (e.g. N-isobutyl decanamide) and N-acylethanolamides (NAE) signaling that control meristematic activity and differentiation processes during plant development. Contributes to vascular bundle formation and secondary growth in a cytokinin-dependent manner, probably by promoting the maintenance of mitotic activity and/or identity of procambial cells. Plays a role in the cytokinin-mediated repression of the iron uptake pathway. Required by the cytokinin-dependent flower development regulation pathway. In Arabidopsis thaliana (Mouse-ear cress), this protein is Histidine kinase 3 (AHK3).